A 999-amino-acid polypeptide reads, in one-letter code: Hypoxia up-regulated protein 1 (999 aa).

Positions 1–32 are cleaved as a signal peptide; it reads MAATVRRQRPRRLLCWALVAVLLADLLALSDT. Asn-155, Asn-222, and Asn-515 each carry an N-linked (GlcNAc...) asparagine glycan. A Phosphoserine modification is found at Ser-567. The disordered stretch occupies residues 567–694; it reads SPEEESTLTK…KKPKPARKQK (128 aa). Polar residues predominate over residues 574-583; sequence LTKLGNTISS. Asn-596 carries N-linked (GlcNAc...) asparagine glycosylation. 2 stretches are compositionally biased toward basic and acidic residues: residues 611 to 626 and 641 to 668; these read GSKD…KEEA and PKGD…KPNE. The segment covering 669–680 has biased composition (low complexity); the sequence is KGQAGPEGAAPA. Asn-830, Asn-862, and Asn-869 each carry an N-linked (GlcNAc...) asparagine glycan. Residue Lys-883 is modified to N6-acetyllysine. Residues 909–999 are disordered; sequence AKFTKPRPRP…QKRPSKNDEL (91 aa). Asn-922 and Asn-931 each carry an N-linked (GlcNAc...) asparagine glycan. The span at 949-962 shows a compositional bias: basic and acidic residues; sequence EEAKPILEPDKEET. A Prevents secretion from ER motif is present at residues 996-999; sequence NDEL.

Belongs to the heat shock protein 70 family. As to quaternary structure, part of a large chaperone multiprotein complex comprising DNAJB11, HSP90B1, HSPA5, HYOU, PDIA2, PDIA4, PDIA6, PPIB, SDF2L1, UGGT1 and very small amounts of ERP29, but not, or at very low levels, CALR nor CANX.

Its subcellular location is the endoplasmic reticulum lumen. Functionally, has a pivotal role in cytoprotective cellular mechanisms triggered by oxygen deprivation. Promotes HSPA5/BiP-mediated ATP nucleotide exchange and thereby activates the unfolded protein response (UPR) pathway in the presence of endoplasmic reticulum stress. May play a role as a molecular chaperone and participate in protein folding. In Mus musculus (Mouse), this protein is Hypoxia up-regulated protein 1 (Hyou1).